The sequence spans 55 residues: Conotoxin Cal6.40 (55 aa).

A signal peptide spans 1–21 (MSGSGVLLLTLLLLVPLSALA). 3 disulfides stabilise this stretch: Cys24-Cys36, Cys29-Cys41, and Cys35-Cys50.

As to expression, expressed by the venom duct.

The protein resides in the secreted. Functionally, probable neurotoxin. In Californiconus californicus (California cone), this protein is Conotoxin Cal6.40.